Reading from the N-terminus, the 498-residue chain is Glycerol kinase (498 aa).

Thr-11 contacts ADP. Residues Thr-11, Ser-12, and Ser-13 each contribute to the ATP site. Thr-11 lines the sn-glycerol 3-phosphate pocket. Arg-15 provides a ligand contact to ADP. Sn-glycerol 3-phosphate contacts are provided by Arg-81, Glu-82, Tyr-133, and Asp-242. Glycerol contacts are provided by Arg-81, Glu-82, Tyr-133, Asp-242, and Gln-243. Positions 264 and 307 each coordinate ADP. ATP is bound by residues Thr-264, Gly-307, Gln-311, and Gly-412. ADP is bound by residues Gly-412 and Asn-416.

The protein belongs to the FGGY kinase family.

It carries out the reaction glycerol + ATP = sn-glycerol 3-phosphate + ADP + H(+). The protein operates within polyol metabolism; glycerol degradation via glycerol kinase pathway; sn-glycerol 3-phosphate from glycerol: step 1/1. Its activity is regulated as follows. Inhibited by fructose 1,6-bisphosphate (FBP). Key enzyme in the regulation of glycerol uptake and metabolism. Catalyzes the phosphorylation of glycerol to yield sn-glycerol 3-phosphate. In Acidovorax sp. (strain JS42), this protein is Glycerol kinase.